The sequence spans 184 residues: Lysozyme 1 (184 aa).

Residues 1-20 (MNGLILFCAVVFATAVCTYG) form the signal peptide. One can recognise an I-type lysozyme domain in the interval 69–184 (TGMVSQQCLR…WRRVQAQGCN (116 aa)). 6 disulfide bridges follow: C76/C152, C81/C87, C92/C101, C114/C134, C124/C130, and C148/C166. E84 serves as the catalytic Proton donor. The Nucleophile role is filled by D95. 107-113 (KRAYWID) contributes to the substrate binding site. Substrate is bound by residues Y138 and 159–161 (HNG).

Hemolymph, labial palps, non-vesiculated cells of mantle connective tissue, cells of interlamellar junctions and epithelia surrounding the water tubes of the gills.

Its subcellular location is the secreted. The catalysed reaction is Hydrolysis of (1-&gt;4)-beta-linkages between N-acetylmuramic acid and N-acetyl-D-glucosamine residues in a peptidoglycan and between N-acetyl-D-glucosamine residues in chitodextrins.. Functionally, has antibacterial activity against the Gram-positive bacteria L.garvieae, M.luteus and Enterococcus sp., and the Gram-negative bacteria E.coli and V.vulnificus. Weak antibacterial activity against the Gram-negative bacterium A.hydrophila. No antibacterial activity detected against the Gram-positive bacterium S.iniae or against the Gram-negative bacterium E.ictaluri. Shows some chitinase activity but no isopeptidase activity. The polypeptide is Lysozyme 1 (Crassostrea virginica (Eastern oyster)).